Reading from the N-terminus, the 304-residue chain is Probable phytol kinase 2, chloroplastic (304 aa).

The N-terminal 59 residues, 1–59 (MVSLISAHLLSLPSSAPRSRPQSRPPLSPPAAAAAASCSFDLPRPRRLVADGSRRKGTM), are a transit peptide targeting the chloroplast. Helical transmembrane passes span 68–88 (SGLAHDLGSAAVTAGVALALL), 113–133 (IGMVFLLFWPLFSSGSYAPFL), 134–154 (AAVAPGINIIRMLLLGLGVMK), 170–190 (ELLKGPLYYATTITFATSIFW), 194–214 (PIAIALICNLCAGDGIADIVG), 231–251 (AGSIAMALAGFMASIGYMHYF), and 256–276 (FIEESWSLAFGFLVVSVTAAL).

It belongs to the polyprenol kinase family.

It localises to the plastid. The protein resides in the chloroplast membrane. It catalyses the reaction phytol + CTP = phytyl phosphate + CDP + H(+). The protein operates within cofactor biosynthesis; tocopherol biosynthesis. Functionally, involved in the activation and reutilization of phytol from chlorophyll degradation in plant metabolism, including tocopherol biosynthesis. Catalyzes the conversion of phytol to phytol monophosphate (PMP). The protein is Probable phytol kinase 2, chloroplastic of Oryza sativa subsp. japonica (Rice).